The primary structure comprises 337 residues: MNNLIKFIAALPKAELHLHIEGSLEPELMFELAKRNKVTLPFPDVESVKAAYNFNNLQEFLDIYYQGTNVLKTEEDFCDLAMAYFYRAHRDNVLHSEIFFDPQSHTERGIPFNVVMNGLLAAITKAEAELGMSVQLIMCFLRHLDEESAFATLRMAEPFLDKIAGVGLDSSEVGNPPSKFRHVFAEARQKGLKLVAHAGEEGDASYIKEALDILNIDRIDHGNRITEDRLLMTRAARSAIALTICPLSNQKLQVVPDLRNHPLPYLLRQGLRVTINSDDPAYFGGYVNDNYKALAEYCGLKAADFVEIARNSFLGSFLPDQTVAAYLDVLDKYVDSF.

Zn(2+) is bound by residues His17, His19, and His197. Glu200 serves as the catalytic Proton donor. A Zn(2+)-binding site is contributed by Asp278. Asp279 is a substrate binding site.

This sequence belongs to the metallo-dependent hydrolases superfamily. Adenosine and AMP deaminases family. Adenine deaminase type 2 subfamily. It depends on Zn(2+) as a cofactor.

The catalysed reaction is adenine + H2O + H(+) = hypoxanthine + NH4(+). In terms of biological role, catalyzes the hydrolytic deamination of adenine to hypoxanthine. Plays an important role in the purine salvage pathway and in nitrogen catabolism. The sequence is that of Adenine deaminase from Zymomonas mobilis subsp. mobilis (strain ATCC 31821 / ZM4 / CP4).